The chain runs to 362 residues: Nuclear hormone receptor family member nhr-77 (362 aa).

Positions 8-82 (DPICPVCEFP…AGMKRNLVKQ (75 aa)) form a DNA-binding region, nuclear receptor. 2 consecutive NR C4-type zinc fingers follow at residues 11-32 (CPVC…CGAC) and 48-69 (CEKN…FDYC). The 218-residue stretch at 145-362 (EAEKDVSKIL…KLYIQLGLPF (218 aa)) folds into the NR LBD domain.

It belongs to the nuclear hormone receptor family.

It localises to the nucleus. In terms of biological role, orphan nuclear receptor. The protein is Nuclear hormone receptor family member nhr-77 (nhr-77) of Caenorhabditis elegans.